The following is a 157-amino-acid chain: Siroheme decarboxylase NirG subunit (157 aa).

It belongs to the Ahb/Nir family. As to quaternary structure, forms a complex composed of NirDL, NirG and NirH. All proteins are required for the total conversion of siroheme to didecarboxysiroheme.

The enzyme catalyses siroheme + 2 H(+) = 12,18-didecarboxysiroheme + 2 CO2. The protein operates within porphyrin-containing compound metabolism. Functionally, involved in heme d1 biosynthesis. Catalyzes the decarboxylation of siroheme into didecarboxysiroheme. Siroheme is probably decarboxylated to monodecarboxysiroheme, which is in turn decarboxylated to didecarboxysiroheme. In Paracoccus pantotrophus (Thiosphaera pantotropha), this protein is Siroheme decarboxylase NirG subunit.